The primary structure comprises 263 residues: Putative cysteine-rich repeat secretory protein 31 (263 aa).

Residues 1–32 (MHNSYSLSKRLVLVLFLAVVATQLFLIRNVSS) form the signal peptide. 2 Gnk2-homologous domains span residues 39-141 (YLHH…AIEV) and 146-260 (YDNN…FYPF).

Belongs to the cysteine-rich repeat secretory protein family.

It is found in the secreted. This is Putative cysteine-rich repeat secretory protein 31 (CRRSP31) from Arabidopsis thaliana (Mouse-ear cress).